The primary structure comprises 71 residues: Permeability factor 2 (71 aa).

2 cysteine pairs are disulfide-bonded: cysteine 7–cysteine 33 and cysteine 9–cysteine 49.

The protein belongs to the intercrine alpha (chemokine CxC) family. Homodimer.

Its subcellular location is the secreted. Its function is as follows. Has chemotactic activity for neutrophils. The protein is Permeability factor 2 of Oryctolagus cuniculus (Rabbit).